The sequence spans 493 residues: Probable cytosol aminopeptidase (493 aa).

K257 and D262 together coordinate Mn(2+). K269 is an active-site residue. Mn(2+) is bound by residues D281, D341, and E343. The active site involves R345.

The protein belongs to the peptidase M17 family. Mn(2+) is required as a cofactor.

The protein localises to the cytoplasm. It catalyses the reaction Release of an N-terminal amino acid, Xaa-|-Yaa-, in which Xaa is preferably Leu, but may be other amino acids including Pro although not Arg or Lys, and Yaa may be Pro. Amino acid amides and methyl esters are also readily hydrolyzed, but rates on arylamides are exceedingly low.. It carries out the reaction Release of an N-terminal amino acid, preferentially leucine, but not glutamic or aspartic acids.. In terms of biological role, presumably involved in the processing and regular turnover of intracellular proteins. Catalyzes the removal of unsubstituted N-terminal amino acids from various peptides. The protein is Probable cytosol aminopeptidase of Synechococcus sp. (strain WH7803).